Reading from the N-terminus, the 446-residue chain is MRECISVHIGQAGVQIGNACWELFCLEHSIQPDGTFSDPPSSDDSFATFFRETSMSKYVPRAIMVDLEPTVVDEVRTGTYRHLFHPEQLITGKEDAANNYARGHYTVGKDKVDMVSDRIRKLADSCSGLQGFLIFHSFGGGTGSGFTSLLMERLSVEYGKKSKLEFAIYPAPQASSAVVEPYNSVLTTHTTLEHSDCVFMVDNEAIYDICHRNLDIERPTYTNLNRLISQIVSSITASLRFDGALNVDLTEFQTNLVPFPRIHFPLVTYAPIISSDRAYHEQLSVAEITSSCFEPNNQMVKCDPQQGKYMACCMLYRGDVVPKDVNVAIAAIKTNRSLQFVDWCPTGFKVGINYQPPIPTPGGDLAQVQRAVCMLSNTTAIAEAWARLDHKFDLMYAKRAFVHWYVSEGMEEGEFAEAREDLAALEKDYDEVATDLFEDENEAGDS.

The short motif at 1–4 (MREC) is the MREC motif element. Positions 11, 68, 137, 141, 142, 176, 203, and 225 each coordinate GTP. Position 68 (Glu-68) interacts with Mg(2+). The active site involves Glu-251.

The protein belongs to the tubulin family. As to quaternary structure, dimer of alpha and beta chains. A typical microtubule is a hollow water-filled tube with an outer diameter of 25 nm and an inner diameter of 15 nM. Alpha-beta heterodimers associate head-to-tail to form protofilaments running lengthwise along the microtubule wall with the beta-tubulin subunit facing the microtubule plus end conferring a structural polarity. Microtubules usually have 13 protofilaments but different protofilament numbers can be found in some organisms and specialized cells. It depends on Mg(2+) as a cofactor. Some glutamate residues at the C-terminus are polyglycylated, resulting in polyglycine chains on the gamma-carboxyl group. Glycylation is mainly limited to tubulin incorporated into axonemes (cilia and flagella) whereas glutamylation is prevalent in neuronal cells, centrioles, axonemes, and the mitotic spindle. Both modifications can coexist on the same protein on adjacent residues, and lowering polyglycylation levels increases polyglutamylation, and reciprocally. The precise function of polyglycylation is still unclear. Post-translationally, some glutamate residues at the C-terminus are polyglutamylated, resulting in polyglutamate chains on the gamma-carboxyl group. Polyglutamylation plays a key role in microtubule severing by spastin (SPAST). SPAST preferentially recognizes and acts on microtubules decorated with short polyglutamate tails: severing activity by SPAST increases as the number of glutamates per tubulin rises from one to eight, but decreases beyond this glutamylation threshold. As to expression, testis specific.

The protein resides in the cytoplasm. Its subcellular location is the cytoskeleton. The enzyme catalyses GTP + H2O = GDP + phosphate + H(+). In terms of biological role, tubulin is the major constituent of microtubules, a cylinder consisting of laterally associated linear protofilaments composed of alpha- and beta-tubulin heterodimers. Microtubules grow by the addition of GTP-tubulin dimers to the microtubule end, where a stabilizing cap forms. Below the cap, tubulin dimers are in GDP-bound state, owing to GTPase activity of alpha-tubulin. The chain is Tubulin alpha-2 chain from Gallus gallus (Chicken).